The following is a 131-amino-acid chain: Ribosome-binding factor A (131 aa).

This sequence belongs to the RbfA family. In terms of assembly, monomer. Binds 30S ribosomal subunits, but not 50S ribosomal subunits or 70S ribosomes.

It is found in the cytoplasm. Functionally, one of several proteins that assist in the late maturation steps of the functional core of the 30S ribosomal subunit. Associates with free 30S ribosomal subunits (but not with 30S subunits that are part of 70S ribosomes or polysomes). Required for efficient processing of 16S rRNA. May interact with the 5'-terminal helix region of 16S rRNA. This is Ribosome-binding factor A from Thermotoga sp. (strain RQ2).